The following is a 218-amino-acid chain: Peptidyl-tRNA hydrolase (218 aa).

Y19 contributes to the tRNA binding site. H24 acts as the Proton acceptor in catalysis. TRNA-binding residues include Y68, N70, and N116. The interval 181–218 is disordered; the sequence is WNTATQRLNARPAPPKPPKAPKAPQPAAADQPKDESQP. The segment covering 192–204 has biased composition (pro residues); the sequence is PAPPKPPKAPKAP.

The protein belongs to the PTH family. As to quaternary structure, monomer.

The protein resides in the cytoplasm. It catalyses the reaction an N-acyl-L-alpha-aminoacyl-tRNA + H2O = an N-acyl-L-amino acid + a tRNA + H(+). Functionally, hydrolyzes ribosome-free peptidyl-tRNAs (with 1 or more amino acids incorporated), which drop off the ribosome during protein synthesis, or as a result of ribosome stalling. Catalyzes the release of premature peptidyl moieties from peptidyl-tRNA molecules trapped in stalled 50S ribosomal subunits, and thus maintains levels of free tRNAs and 50S ribosomes. This Azoarcus sp. (strain BH72) protein is Peptidyl-tRNA hydrolase.